Here is a 1136-residue protein sequence, read N- to C-terminus: Unconventional myosin-Ib (1136 aa).

One can recognise a Myosin motor domain in the interval 15–701 (IGVGDTVLLE…TLFQLEDLRK (687 aa)). Ser60 is subject to Phosphoserine. ATP is bound at residue 108 to 115 (GESGAGKT). Lys287 is covalently cross-linked (Glycyl lysine isopeptide (Lys-Gly) (interchain with G-Cter in SUMO1); alternate). Lys287 participates in a covalent cross-link: Glycyl lysine isopeptide (Lys-Gly) (interchain with G-Cter in SUMO2); alternate. An actin-binding region spans residues 592 to 599 (YIRCIKPN). IQ domains are found at residues 704–729 (LEDL…LMKR), 730–750 (SQVV…YQQI), 750–778 (IKSS…HQKR), 780–807 (KEAA…DEAR), 808–837 (NKHA…EARR), and 837–866 (RKHA…ANAG). In terms of domain architecture, TH1 spans 952 to 1136 (KALYPSSVGQ…NNRLLEVAVP (185 aa)).

Belongs to the TRAFAC class myosin-kinesin ATPase superfamily. Myosin family.

Its function is as follows. Motor protein that may participate in process critical to neuronal development and function such as cell migration, neurite outgrowth and vesicular transport. This chain is Unconventional myosin-Ib (Myo1b), found in Rattus norvegicus (Rat).